A 308-amino-acid polypeptide reads, in one-letter code: Ribosomal protein L11 methyltransferase (308 aa).

Residues Thr160, Gly181, Asp203, and Asn245 each coordinate S-adenosyl-L-methionine.

This sequence belongs to the methyltransferase superfamily. PrmA family.

The protein resides in the cytoplasm. It carries out the reaction L-lysyl-[protein] + 3 S-adenosyl-L-methionine = N(6),N(6),N(6)-trimethyl-L-lysyl-[protein] + 3 S-adenosyl-L-homocysteine + 3 H(+). Methylates ribosomal protein L11. The protein is Ribosomal protein L11 methyltransferase of Thermoanaerobacter pseudethanolicus (strain ATCC 33223 / 39E) (Clostridium thermohydrosulfuricum).